The chain runs to 302 residues: Homoserine O-acetyltransferase (302 aa).

Cys142 acts as the Acyl-thioester intermediate in catalysis. Residues Lys163 and Ser192 each coordinate substrate. His235 acts as the Proton acceptor in catalysis. The active site involves Glu237. Residue Arg249 coordinates substrate.

This sequence belongs to the MetA family.

Its subcellular location is the cytoplasm. The enzyme catalyses L-homoserine + acetyl-CoA = O-acetyl-L-homoserine + CoA. Its pathway is amino-acid biosynthesis; L-methionine biosynthesis via de novo pathway; O-acetyl-L-homoserine from L-homoserine: step 1/1. Functionally, transfers an acetyl group from acetyl-CoA to L-homoserine, forming acetyl-L-homoserine. This chain is Homoserine O-acetyltransferase, found in Geobacillus sp. (strain WCH70).